The chain runs to 1647 residues: MAIGNIAARYLSSLEETDTTATTTTTTTSNVLQPSNRLNSPTKFNRKSLDNNSQDLDALARALNITPSKPETPTSISKGSATSLLRTKFESPSATVSSFKSTSSSNGVSPTKKNHFVEITSDETPSWANKNYKDILNKSPTKFNTQSNVHTPLKQLNQPIGTPSSSSLSPAKNASKSSPGYEYLCRIEAIKQWLESVLQEQITQSASQLISYIRNGIHLAKLANVVLPTSKPVFLNDSKLQFKHTENINRFFQLLDFFNMPDLFRFELTDLYDAKNVPKVWFCLHALSYILHKQDPSYPAMNNLVGKVDFSADDIRTANRALVNSPLPNFSSADTGEGKSDTSNNNSSTTSATAAFMDKVTSPVKKTPSPLKRPQQLQKKQLELVEDNKPELTQDSSGLSKISRDDPFTDRVDLAPPSTSNAKLELHTPPSKSLEFKIKSPIIDLSHRDSDYYTPELESHLPNIIKFQSLARGAVFRYLMFVDRILLKSYQDEFTNLFAIIRGNKARRKTVHKHRDELRLYSFEIIELQSIIRKNFVINKKPNFTSITNDVETVELQSLIRGKLTRDWKKYVTNGLEKFTPQIIDFQSLVRMKSIYSKSNKVISYKDEILPSLIELQSIARSQLYHRFSRSNAIDETEIIKIQSIIRRNAVIEDLYTKLSKVRSNKRRLIELQSIARGGVARTKLCNSVLVTLIYEDGILNQLFAKIRGDNYRKKFNSQKSELLKYEKSSIIPVQTLFRGVLSRYTKEVTLSDIFDQIDSVITLQSVARGKLMRGSIYEFSDYYQKHIKQVVKAQAILQRVFAQNAYKQLITSKNPPLKVIRRFAPLLSNNDRDFQDEMTLSDLKDLIIEKCKANEEYENQIEQLDMKLGLLDKNKISIEEFLKPTKGKTFKPIVENVKNLERLNKSLKKKIELWQTLFYFIQTNPIYLTKLFNSIPYTKNQTKSGQDLFQSVIQLFPVRDSSITYHSREEYFLVKLMIQLMQNDTANSNNLGDITKLHLTNWIDFFTNFNNHTFQRQHLKALLGKFVIRIVDNEQVDFESDPIRIYNQIIDHEMKVYGRSEKSRDISPQAAIQLPEVSNKFVGNLMSLRETCSDLLSMLQKNASGNKALLQIPDHVKLICRQGYLCAQRKFPDKSDQQHLAVAGVIFVKHYLGSILQVPENYGILTGNNDTQKAKSKDNLRYLYRVMLQLFSMKPFNDNFLKPLNEYIMASTDTVKSIISQAIINVGEIETVYELHDYDDLVTHQRPKLTISVNSLIQLEKSILQNVDIITTGNDDQLYKTCVEVEKLLISPQDMLTLTDLSSVTLNLNPTTQEESIVDSKTKTLFTQAKRCLLYIIRVQEEDDSDDLLELLISGIKPSHEQRFKEIVQYEKAEQDISLNNSKSVTANTVNKKKSTRPYSGTSLGDLSNLTYHELKKMCLEIILKLESMGELTRKNSFQTLLNQIAMDIKTKDSQRQCRWQQLQVSQKTIKKLSEKENYLKTQLHNYKKHVESVLLELQSKSKSNDKNWKRRLFNIMVIPVFSKQYFYHRELRKHNRLPKFGSYKYSAKKLIDQKVLIDFSTANNVATASKLDFMFSCHQVGKFTIEVASGTVNIPGATNTITLDELLALQYENKTKFELFDGMATFDSNNFMGLIFRKFYDLKKE.

Positions 18–51 are disordered; the sequence is DTTATTTTTTTSNVLQPSNRLNSPTKFNRKSLDN. The segment covering 19-28 has biased composition (low complexity); the sequence is TTATTTTTTT. Over residues 29-43 the composition is skewed to polar residues; that stretch reads SNVLQPSNRLNSPTK. At Ser48 the chain carries Phosphoserine. Residues Thr66, Thr72, and Thr82 each carry the phosphothreonine modification. Ser83, Ser91, and Ser139 each carry phosphoserine. Residues 143–162 are compositionally biased toward polar residues; that stretch reads FNTQSNVHTPLKQLNQPIGT. Positions 143-175 are disordered; that stretch reads FNTQSNVHTPLKQLNQPIGTPSSSSLSPAKNAS. Over residues 163 to 175 the composition is skewed to low complexity; sequence PSSSSLSPAKNAS. A phosphoserine mark is found at Ser165, Ser167, and Ser169. In terms of domain architecture, Calponin-homology (CH) spans 184-291; the sequence is LCRIEAIKQW…FCLHALSYIL (108 aa). The tract at residues 326–427 is disordered; sequence PLPNFSSADT…STSNAKLELH (102 aa). Over residues 342-355 the composition is skewed to low complexity; it reads TSNNNSSTTSATAA. Position 367 is a phosphothreonine (Thr367). Positions 368 to 379 are enriched in low complexity; the sequence is PSPLKRPQQLQK. Position 369 is a phosphoserine (Ser369). Composition is skewed to basic and acidic residues over residues 380–392 and 402–413; these read KQLELVEDNKPEL and ISRDDPFTDRVD. Residues Ser433 and Ser440 each carry the phosphoserine modification. IQ domains lie at 467–478, 528–539, 556–567, 586–597, 616–627, 642–653, 672–683, 734–745, and 764–775; these read FQSLARGAVFRY, LQSIIRKNFVIN, LQSLIRGKLTRD, FQSLVRMKSIYS, LQSIARSQLYHR, IQSIIRRNAVIE, LQSIARGGVART, VQTLFRGVLSRY, and LQSVARGKLMRG. Residues 841 to 919 are a coiled coil; sequence LSDLKDLIIE…KKIELWQTLF (79 aa). Residues 958 to 1223 form the Ras-GAP domain; that stretch reads PVRDSSITYH…DTVKSIISQA (266 aa). 5 positions are modified to phosphoserine: Ser1064, Ser1068, Ser1088, Ser1383, and Ser1385.

In terms of assembly, interacts with myosin MYO1 and its light chain MLC1. Interacts with BNI1. Interacts with BNR1. Interacts with CLB2. Interacts with CLB4. Interacts with CDC28. In terms of processing, hyperphosphorylated. Phosphorylation is cell cycle-dependent and peaks at the time of cytokinesis. Contains 21 consensus sites for cyclin-dependent kinases (CDKs). At least some of them are phosphorylated by the CLB2-CDC28 kinase complex. Mutation of 15 of the phosphorylation sites to Ala caused both premature assembly and delayed disassembly of the actomyosin ring, blocked interaction with the actin-nucleating proteins BNI1 and BNR1, and resulted in defects in cytokinesis.

The protein resides in the bud neck. Its function is as follows. Required for the assembly and the contraction of the actomyosin ring at the bud neck during cytokinesis. In Candida albicans (strain SC5314 / ATCC MYA-2876) (Yeast), this protein is Ras GTPase-activating-like protein IQG1 (IQG1).